Reading from the N-terminus, the 113-residue chain is MEVQALTRYARMSPKKMRDISRIIQGRKAAEAADYLALIPRKSARLIAKTLRSAIANAENNNNLSADALTVKLALIENGPVLKRFKAGARGSAMPRRKKMAHIRIVLTDGNSN.

Belongs to the universal ribosomal protein uL22 family. Part of the 50S ribosomal subunit.

Its function is as follows. This protein binds specifically to 23S rRNA; its binding is stimulated by other ribosomal proteins, e.g. L4, L17, and L20. It is important during the early stages of 50S assembly. It makes multiple contacts with different domains of the 23S rRNA in the assembled 50S subunit and ribosome. Functionally, the globular domain of the protein is located near the polypeptide exit tunnel on the outside of the subunit, while an extended beta-hairpin is found that lines the wall of the exit tunnel in the center of the 70S ribosome. This is Large ribosomal subunit protein uL22 from Opitutus terrae (strain DSM 11246 / JCM 15787 / PB90-1).